Here is a 567-residue protein sequence, read N- to C-terminus: MAEISRQAYADMFGPTTGDKVRLADTDLWIEVENDLTIYGEEVKFGGGKVIRDGMGQGQMTAQDCVDLVLTNALIVDHWGIVKADIGVKDGRIFAVGKAGNPDIQPGVTIPIGAATEVIAAEGKIVTAGGIDTHIHWICPQQAEEALVSGVTTMIGGGTGPAAGTNATTCTPGPWYIARMLQAADTLPVNIGLLGKGNGSNPDALREQIAAGAIGLKIHEDWGSTPATINCSLSVAEEMDIQVALHSDTLNEAGFVEDTLAAIDGRTIHTFHTEGAGGGHAPDIITACAHPNILPSSTNPTLPYTVNTIDEHLDMLMVCHHLDPDIAEDVAFAESRIRRETIAAEDVLHDIGAFSLTSSDSQAMGRVGEVIIRTWQVAHRMKVQRGALAEESGDNDNFRAKRYVAKYTINPALTHGIAHEVGSVEAGKLADLVVWSPAFFGVKPATIVKGGMIACAPMGDINASIPTPQPVHYRPMFGSLGAARHATRLTFISQAADANRIPQQLNLQSAIAVVKGCRTVKKADMIHNGLQPNITVDAQTYEVRIDGELITSEPADVLPMAQRYFLF.

Residues 129-567 enclose the Urease domain; the sequence is GGIDTHIHWI…LPMAQRYFLF (439 aa). Ni(2+) is bound by residues His134, His136, and Lys217. Lys217 carries the N6-carboxylysine modification. His219 serves as a coordination point for substrate. His246 and His272 together coordinate Ni(2+). His320 acts as the Proton donor in catalysis. A Ni(2+)-binding site is contributed by Asp360.

It belongs to the metallo-dependent hydrolases superfamily. Urease alpha subunit family. In terms of assembly, heterotrimer of UreA (gamma), UreB (beta) and UreC (alpha) subunits. Three heterotrimers associate to form the active enzyme. Ni cation is required as a cofactor. Post-translationally, carboxylation allows a single lysine to coordinate two nickel ions.

It is found in the cytoplasm. It catalyses the reaction urea + 2 H2O + H(+) = hydrogencarbonate + 2 NH4(+). The protein operates within nitrogen metabolism; urea degradation; CO(2) and NH(3) from urea (urease route): step 1/1. This Enterobacter sp. (strain 638) protein is Urease subunit alpha.